The chain runs to 360 residues: Photosystem II protein D1 3 (360 aa).

A run of 3 helical transmembrane segments spans residues 29–46, 118–133, and 142–156; these read YVGW…AATV, HFLI…QWEL, and WICV…SATA. Chlorophyll a is bound at residue histidine 118. Tyrosine 126 is a pheophytin a binding site. The [CaMn4O5] cluster site is built by aspartate 170 and glutamate 189. Residues 197-218 traverse the membrane as a helical segment; it reads FHMLGVAGVFGGSLFSAMHGSL. Histidine 198 is a binding site for chlorophyll a. A quinone-binding positions include histidine 215 and 264–265; that span reads SF. Histidine 215 is a Fe cation binding site. Residue histidine 272 participates in Fe cation binding. The helical transmembrane segment at 274–288 threads the bilayer; the sequence is FLAAWPVIGIWFTAL. [CaMn4O5] cluster-binding residues include histidine 332, glutamate 333, aspartate 342, and alanine 344. Residues 345-360 constitute a propeptide that is removed on maturation; that stretch reads AGEVAPVALTAPAING.

The protein belongs to the reaction center PufL/M/PsbA/D family. PSII is composed of 1 copy each of membrane proteins PsbA, PsbB, PsbC, PsbD, PsbE, PsbF, PsbH, PsbI, PsbJ, PsbK, PsbL, PsbM, PsbT, PsbX, PsbY, PsbZ, Psb30/Ycf12, peripheral proteins PsbO, CyanoQ (PsbQ), PsbU, PsbV and a large number of cofactors. It forms dimeric complexes. The D1/D2 heterodimer binds P680, chlorophylls that are the primary electron donor of PSII, and subsequent electron acceptors. It shares a non-heme iron and each subunit binds pheophytin, quinone, additional chlorophylls, carotenoids and lipids. D1 provides most of the ligands for the Mn4-Ca-O5 cluster of the oxygen-evolving complex (OEC). There is also a Cl(-1) ion associated with D1 and D2, which is required for oxygen evolution. The PSII complex binds additional chlorophylls, carotenoids and specific lipids. is required as a cofactor. Tyr-161 forms a radical intermediate that is referred to as redox-active TyrZ, YZ or Y-Z. In terms of processing, C-terminally processed by CtpA; processing is essential to allow assembly of the oxygen-evolving complex and thus photosynthetic growth.

The protein localises to the cellular thylakoid membrane. It catalyses the reaction 2 a plastoquinone + 4 hnu + 2 H2O = 2 a plastoquinol + O2. Photosystem II (PSII) is a light-driven water:plastoquinone oxidoreductase that uses light energy to abstract electrons from H(2)O, generating O(2) and a proton gradient subsequently used for ATP formation. It consists of a core antenna complex that captures photons, and an electron transfer chain that converts photonic excitation into a charge separation. The D1/D2 (PsbA/PsbD) reaction center heterodimer binds P680, the primary electron donor of PSII as well as several subsequent electron acceptors. This chain is Photosystem II protein D1 3, found in Trichormus variabilis (strain ATCC 29413 / PCC 7937) (Anabaena variabilis).